The sequence spans 431 residues: Beta-1,4-glucuronyltransferase 1 (431 aa).

Topologically, residues 1 to 11 are cytoplasmic; sequence MHFSKKCSVFK. Residues 12–32 traverse the membrane as a helical segment; it reads VVLSALLIVALLQLLYLSFLS. Topologically, residues 33-431 are lumenal; it reads KLHGKQQRYK…AKYPTSPRRC (399 aa). An N-linked (GlcNAc...) asparagine glycan is attached at Asn216. Residues Asp241 and Asp243 each contribute to the Mn(2+) site. N-linked (GlcNAc...) asparagine glycosylation occurs at Asn314.

Belongs to the glycosyltransferase 49 family. The cofactor is Mn(2+).

It localises to the golgi apparatus membrane. It catalyses the reaction 3-O-[beta-D-Xyl-(1-&gt;4)-Rib-ol-P-Rib-ol-P-3-beta-D-GalNAc-(1-&gt;3)-beta-D-GlcNAc-(1-&gt;4)-(O-6-P-alpha-D-Man)]-Thr-[protein] + UDP-alpha-D-glucuronate = 3-O-[beta-D-GlcA-(1-&gt;3)-beta-D-Xyl-(1-&gt;4)-Rib-ol-P-Rib-ol-P-3-beta-D-GalNAc-(1-&gt;3)-beta-D-GlcNAc-(1-&gt;4)-(O-6-P-alpha-D-Man)]-Thr-[protein] + UDP + H(+). It functions in the pathway protein modification; protein glycosylation. Functionally, beta-1,4-glucuronyltransferase involved in O-mannosylation of alpha-dystroglycan (DAG1). Transfers a glucuronic acid (GlcA) residue onto a xylose (Xyl) acceptor to produce the glucuronyl-beta-1,4-xylose-beta disaccharide primer, which is further elongated by LARGE, during synthesis of phosphorylated O-mannosyl glycan. Phosphorylated O-mannosyl glycan is a carbohydrate structure present in alpha-dystroglycan (DAG1), which is required for binding laminin G-like domain-containing extracellular proteins with high affinity. Required for axon guidance; via its function in O-mannosylation of alpha-dystroglycan (DAG1). The chain is Beta-1,4-glucuronyltransferase 1 from Danio rerio (Zebrafish).